The following is a 476-amino-acid chain: tRNA(Ile)-lysidine synthase (476 aa).

30-35 (SGGPDS) is a binding site for ATP.

The protein belongs to the tRNA(Ile)-lysidine synthase family.

It localises to the cytoplasm. The enzyme catalyses cytidine(34) in tRNA(Ile2) + L-lysine + ATP = lysidine(34) in tRNA(Ile2) + AMP + diphosphate + H(+). In terms of biological role, ligates lysine onto the cytidine present at position 34 of the AUA codon-specific tRNA(Ile) that contains the anticodon CAU, in an ATP-dependent manner. Cytidine is converted to lysidine, thus changing the amino acid specificity of the tRNA from methionine to isoleucine. The protein is tRNA(Ile)-lysidine synthase of Bacillus anthracis.